The following is a 109-amino-acid chain: Immunity protein CdiI (109 aa).

In terms of assembly, specifically interacts with cognate toxin CdiA, which inhibits the toxin.

Immunity protein component of a toxin-immunity protein module, which functions as a cellular contact-dependent growth inhibition (CDI) system. CDI modules allow bacteria to communicate with and inhibit the growth of closely related neighboring bacteria in a contact-dependent fashion. Neutralizes the toxic activity of cognate toxin CdiA (C-terminal 160 residue CT fragment) upon expression in E.coli. Does not inhibit toxic activity of CdiA from other strains of B.pseudomallei. The protein is Immunity protein CdiI (cdiI) of Burkholderia pseudomallei (Pseudomonas pseudomallei).